Consider the following 208-residue polypeptide: Large ribosomal subunit protein uL3 (208 aa).

An N5-methylglutamine modification is found at Q149.

It belongs to the universal ribosomal protein uL3 family. As to quaternary structure, part of the 50S ribosomal subunit. Forms a cluster with proteins L14 and L19. Post-translationally, methylated by PrmB.

One of the primary rRNA binding proteins, it binds directly near the 3'-end of the 23S rRNA, where it nucleates assembly of the 50S subunit. This Glaesserella parasuis serovar 5 (strain SH0165) (Haemophilus parasuis) protein is Large ribosomal subunit protein uL3.